The primary structure comprises 484 residues: MNFNSFRKEIYSGNASVKELVNEFFLKIDSLNPKINAYTCLTKKIANSQSENIDKLITNNQKLPSLAGIPIAIKDNICTKGVVTSCSSKMLKDFVSPYESSASGKLWSLGGICLGKTNLDEFAMGSSTETSVFGTTSNPWDVNRVPGGSSGGSAASVAAGLCLAAIGSDTGGSIRQPASFCGVVGLKPTYGRVSRWGLIAFASSLDQIGPITNTVSDAAEILYSISGKDNLDSTCLDKPVPNYLSDLDKSIKGIKIGIIEECFDHPGLDPEVKESVLSSVERFRSLGAEIHDIKCPRFNDGIATYYVIAPCEASANLARYDGVKYGYRSEGESNLLEMICKSRAEGFGDEVQRRILIGTYALSAGYSDAYYKKAQRVRTLIRSDFDNAFNEVDVLLTPTCPTTAFLKGDFVNDPLSMYLSDLLTVPVNLAGLPAISIPCGFDKKGLPIGLQLIGNVLEEHRILNVANIFEKDAEVMNTKPNIEI.

Residues Lys-74 and Ser-149 each act as charge relay system in the active site. Ser-173 serves as the catalytic Acyl-ester intermediate.

It belongs to the amidase family. GatA subfamily. In terms of assembly, heterotrimer of A, B and C subunits.

It carries out the reaction L-glutamyl-tRNA(Gln) + L-glutamine + ATP + H2O = L-glutaminyl-tRNA(Gln) + L-glutamate + ADP + phosphate + H(+). Its function is as follows. Allows the formation of correctly charged Gln-tRNA(Gln) through the transamidation of misacylated Glu-tRNA(Gln) in organisms which lack glutaminyl-tRNA synthetase. The reaction takes place in the presence of glutamine and ATP through an activated gamma-phospho-Glu-tRNA(Gln). The polypeptide is Glutamyl-tRNA(Gln) amidotransferase subunit A (Prochlorococcus marinus subsp. pastoris (strain CCMP1986 / NIES-2087 / MED4)).